The chain runs to 131 residues: Ribosome-binding factor A (131 aa).

It belongs to the RbfA family. As to quaternary structure, monomer. Binds 30S ribosomal subunits, but not 50S ribosomal subunits or 70S ribosomes.

The protein localises to the cytoplasm. In terms of biological role, one of several proteins that assist in the late maturation steps of the functional core of the 30S ribosomal subunit. Associates with free 30S ribosomal subunits (but not with 30S subunits that are part of 70S ribosomes or polysomes). Required for efficient processing of 16S rRNA. May interact with the 5'-terminal helix region of 16S rRNA. The chain is Ribosome-binding factor A from Vibrio vulnificus (strain CMCP6).